The sequence spans 118 residues: Large ribosomal subunit protein bL20 (118 aa).

It belongs to the bacterial ribosomal protein bL20 family.

Binds directly to 23S ribosomal RNA and is necessary for the in vitro assembly process of the 50S ribosomal subunit. It is not involved in the protein synthesizing functions of that subunit. In Francisella tularensis subsp. tularensis (strain WY96-3418), this protein is Large ribosomal subunit protein bL20.